A 374-amino-acid polypeptide reads, in one-letter code: Guanine nucleotide-binding protein subunit alpha-15 (374 aa).

The G-alpha domain occupies 41 to 374 (GELKLLLLGP…ARYLDEINLL (334 aa)). Residues 44–57 (KLLLLGPGESGKST) are G1 motif. GTP is bound by residues 49–56 (GPGESGKS), 183–189 (LRSRMPT), 208–212 (DAGGQ), 277–280 (NKTD), and Ala346. Positions 56 and 189 each coordinate Mg(2+). The segment at 181–189 (DVLRSRMPT) is G2 motif. Positions 204-213 (LRIVDAGGQK) are G3 motif. Positions 273–280 (ILFLNKTD) are G4 motif. A G5 motif region spans residues 344–349 (TCATDT).

Belongs to the G-alpha family. G(q) subfamily. In terms of assembly, g proteins are composed of 3 units; alpha, beta and gamma. The alpha chain contains the guanine nucleotide binding site.

Guanine nucleotide-binding proteins (G proteins) are involved as modulators or transducers in various transmembrane signaling systems. In Rattus norvegicus (Rat), this protein is Guanine nucleotide-binding protein subunit alpha-15 (Gna15).